The primary structure comprises 335 residues: Phospho-N-acetylmuramoyl-pentapeptide-transferase (335 aa).

10 helical membrane passes run 3–23 (LTIL…PHFI), 53–73 (GGTV…LVYF), 78–98 (SLGL…IGFL), 118–138 (FTFQ…PSGI), 143–163 (VFGY…FWVV), 174–194 (GIDG…GVIA), 200–220 (FDVL…FLFN), 226–246 (IFMG…ISIA), 251–271 (WTLL…MLQV), and 314–334 (VDAF…AILY).

It belongs to the glycosyltransferase 4 family. MraY subfamily. It depends on Mg(2+) as a cofactor.

Its subcellular location is the cell membrane. It catalyses the reaction UDP-N-acetyl-alpha-D-muramoyl-L-alanyl-gamma-D-glutamyl-L-lysyl-D-alanyl-D-alanine + di-trans,octa-cis-undecaprenyl phosphate = Mur2Ac(oyl-L-Ala-gamma-D-Glu-L-Lys-D-Ala-D-Ala)-di-trans,octa-cis-undecaprenyl diphosphate + UMP. Its pathway is cell wall biogenesis; peptidoglycan biosynthesis. Its function is as follows. Catalyzes the initial step of the lipid cycle reactions in the biosynthesis of the cell wall peptidoglycan: transfers peptidoglycan precursor phospho-MurNAc-pentapeptide from UDP-MurNAc-pentapeptide onto the lipid carrier undecaprenyl phosphate, yielding undecaprenyl-pyrophosphoryl-MurNAc-pentapeptide, known as lipid I. This Streptococcus equi subsp. equi (strain 4047) protein is Phospho-N-acetylmuramoyl-pentapeptide-transferase.